The primary structure comprises 225 residues: Ribosomal RNA small subunit methyltransferase G (225 aa).

S-adenosyl-L-methionine is bound by residues Gly-84, Phe-89, 107-109 (DST), 135-136 (AE), and Arg-154.

It belongs to the methyltransferase superfamily. RNA methyltransferase RsmG family.

Its subcellular location is the cytoplasm. In terms of biological role, specifically methylates the N7 position of a guanine in 16S rRNA. This chain is Ribosomal RNA small subunit methyltransferase G, found in Microcystis aeruginosa (strain NIES-843 / IAM M-2473).